The chain runs to 172 residues: Shikimate kinase (172 aa).

Residue 12-17 (GSGKTS) coordinates ATP. Thr16 contributes to the Mg(2+) binding site. The substrate site is built by Asp34, Arg58, and Gly81. Residue Arg122 participates in ATP binding. Arg139 is a binding site for substrate.

The protein belongs to the shikimate kinase family. In terms of assembly, monomer. It depends on Mg(2+) as a cofactor.

The protein resides in the cytoplasm. The catalysed reaction is shikimate + ATP = 3-phosphoshikimate + ADP + H(+). It participates in metabolic intermediate biosynthesis; chorismate biosynthesis; chorismate from D-erythrose 4-phosphate and phosphoenolpyruvate: step 5/7. Functionally, catalyzes the specific phosphorylation of the 3-hydroxyl group of shikimic acid using ATP as a cosubstrate. In Dictyoglomus turgidum (strain DSM 6724 / Z-1310), this protein is Shikimate kinase.